The following is a 59-amino-acid chain: Chromatin protein Cren7 (59 aa).

It belongs to the Cren7 family. In terms of assembly, monomer. Methylated at multiple sites, to varying extents.

Its subcellular location is the chromosome. The protein localises to the cytoplasm. In terms of biological role, a chromatin protein, binds double-stranded DNA without sequence specificity. Constrains negative DNA supercoils. In Sulfolobus acidocaldarius (strain ATCC 33909 / DSM 639 / JCM 8929 / NBRC 15157 / NCIMB 11770), this protein is Chromatin protein Cren7.